Here is a 122-residue protein sequence, read N- to C-terminus: Large ribosomal subunit protein uL14c (122 aa).

It belongs to the universal ribosomal protein uL14 family. Part of the 50S ribosomal subunit.

Its subcellular location is the plastid. It localises to the chloroplast. Binds to 23S rRNA. The chain is Large ribosomal subunit protein uL14c from Adiantum capillus-veneris (Maidenhair fern).